Consider the following 470-residue polypeptide: ATP synthase subunit beta (470 aa).

155-162 (GGAGVGKT) contributes to the ATP binding site.

The protein belongs to the ATPase alpha/beta chains family. As to quaternary structure, F-type ATPases have 2 components, CF(1) - the catalytic core - and CF(0) - the membrane proton channel. CF(1) has five subunits: alpha(3), beta(3), gamma(1), delta(1), epsilon(1). CF(0) has three main subunits: a(1), b(2) and c(9-12). The alpha and beta chains form an alternating ring which encloses part of the gamma chain. CF(1) is attached to CF(0) by a central stalk formed by the gamma and epsilon chains, while a peripheral stalk is formed by the delta and b chains.

Its subcellular location is the cell membrane. The catalysed reaction is ATP + H2O + 4 H(+)(in) = ADP + phosphate + 5 H(+)(out). In terms of biological role, produces ATP from ADP in the presence of a proton gradient across the membrane. The catalytic sites are hosted primarily by the beta subunits. The polypeptide is ATP synthase subunit beta (Lacticaseibacillus casei (Lactobacillus casei)).